The chain runs to 85 residues: MPKLEMMLLVLLILPLCYIDAVGPPPPWNMEDEIIEHWQKLHCHEISDLTPWILCSPEPLCGGKGCCAQGVCDCSGPACTCPPCL.

The first 21 residues, 1–21 (MPKLEMMLLVLLILPLCYIDA), serve as a signal peptide directing secretion. Residues 22 to 40 (VGPPPPWNMEDEIIEHWQK) constitute a propeptide that is removed on maturation.

The protein belongs to the conotoxin D superfamily. Contains 5 disulfide bonds. As to expression, expressed by the venom duct.

The protein localises to the secreted. Its function is as follows. Probable neurotoxin. The polypeptide is Conotoxin Lt28.5 (Conus litteratus (Lettered cone)).